Consider the following 185-residue polypeptide: Somatotropin (185 aa).

Cysteines 52 and 158 form a disulfide. Glu-167 is a Zn(2+) binding site. A disulfide bond links Cys-175 and Cys-183.

It belongs to the somatotropin/prolactin family.

The protein localises to the secreted. Growth hormone plays an important role in growth control and is involved in the regulation of several anabolic processes. Implicated as an osmoregulatory substance important for seawater adaptation. This Katsuwonus pelamis (Skipjack tuna) protein is Somatotropin (gh).